The following is a 361-amino-acid chain: S-adenosylmethionine:tRNA ribosyltransferase-isomerase (361 aa).

This sequence belongs to the QueA family. Monomer.

The protein localises to the cytoplasm. It catalyses the reaction 7-aminomethyl-7-carbaguanosine(34) in tRNA + S-adenosyl-L-methionine = epoxyqueuosine(34) in tRNA + adenine + L-methionine + 2 H(+). It participates in tRNA modification; tRNA-queuosine biosynthesis. Transfers and isomerizes the ribose moiety from AdoMet to the 7-aminomethyl group of 7-deazaguanine (preQ1-tRNA) to give epoxyqueuosine (oQ-tRNA). This Haemophilus ducreyi (strain 35000HP / ATCC 700724) protein is S-adenosylmethionine:tRNA ribosyltransferase-isomerase.